A 3381-amino-acid polypeptide reads, in one-letter code: Versican core protein (3381 aa).

Positions 1 to 20 (MLINIKSILWMCSTLIAAHA) are cleaved as a signal peptide. The Ig-like V-type domain occupies 21-147 (LQKVNMEKSP…EDTQDTVSLT (127 aa)). Intrachain disulfides connect C44–C131, C173–C244, C197–C218, C271–C346, and C295–C316. N57 is a glycosylation site (N-linked (GlcNAc...) asparagine). Link domains lie at 151–246 (VVFH…YCYV) and 252–348 (DVFH…YCFK). N-linked (GlcNAc...) asparagine glycans are attached at residues N331 and N352. A GAG-alpha (glucosaminoglycan attachment domain) region spans residues 349–1336 (PKQNISEATT…IIEVRENKTG (988 aa)). A compositionally biased stretch (polar residues) spans 417–427 (PLTSTHRSATE). Disordered regions lie at residues 417–437 (PLTSTHRSATESLPPDGSMKK) and 603–623 (ESVSASTIVSPDSDGSPMDHR). O-linked (Xyl...) (chondroitin sulfate) serine glycosylation occurs at S660. Residues 816-866 (DNTTSKPLGSTEHVGSPKLPPALITTTGVSGKDKEMPSLTEDGRDEFTRIP) form a disordered region. Residue N817 is glycosylated (N-linked (GlcNAc...) asparagine). The span at 846 to 863 (GKDKEMPSLTEDGRDEFT) shows a compositional bias: basic and acidic residues. Residues N965 and N1017 are each glycosylated (N-linked (GlcNAc...) asparagine). Over residues 1043–1052 (EDFLWKEQTP) the composition is skewed to basic and acidic residues. 2 disordered regions span residues 1043 to 1081 (EDFLWKEQTPEKPVSPPSSTTDTAKETTPPLDEQESDGS) and 1218 to 1244 (FSSADRLHTPSASTEKPPLIDREPDEE). N-linked (GlcNAc...) asparagine glycosylation is present at N1333. Residues 1337–3074 (RMSDFSVSGH…VEGTAVYLPG (1738 aa)) form a GAG-beta region. The disordered stretch occupies residues 1338–1362 (MSDFSVSGHPIDSESKEDEPCSEET). The segment covering 1352-1362 (SKEDEPCSEET) has biased composition (acidic residues). N-linked (GlcNAc...) asparagine glycosylation occurs at N1393. Basic and acidic residues predominate over residues 1417–1428 (KDPEAAEARRGQ). 3 disordered regions span residues 1417–1446 (KDPEAAEARRGQFESVAPSQNFSDSSESDS), 1455–1474 (GLPTAMQPNESKETTESLEI), and 1484–1512 (TAEPFSSGEPDIFPTASIHEGEATEGPDS). N1437 and N1463 each carry an N-linked (GlcNAc...) asparagine glycan. O-linked (Xyl...) (chondroitin sulfate) serine glycans are attached at residues S1539 and S1621. A glycan (N-linked (GlcNAc...) asparagine) is linked at N1653. Positions 1708-1785 (PPLEETTRKE…ERETTSSTVV (78 aa)) are disordered. Over residues 1712-1721 (ETTRKEEEKG) the composition is skewed to basic and acidic residues. The span at 1726–1738 (ASTVEVHSPTQRL) shows a compositional bias: polar residues. Low complexity predominate over residues 1743–1761 (SPSELESSSETPPDDSAAA). The segment covering 1764 to 1784 (KSFTSQMTPTQSERETTSSTV) has biased composition (polar residues). O-linked (Xyl...) (chondroitin sulfate) serine glycosylation is found at S1928 and S1952. Residues 1964 to 1976 (PSVTPTSDLSNHT) are compositionally biased toward polar residues. Disordered regions lie at residues 1964-1986 (PSVTPTSDLSNHTADSEEPGSTL) and 2041-2126 (EGAI…QSSV). N-linked (GlcNAc...) asparagine glycosylation is found at N1974, N2045, N2074, and N2103. Residues 2065–2075 (STEEGEVKENH) are compositionally biased toward basic and acidic residues. S2109 carries the phosphoserine modification. Residues S2240 and S2247 are each glycosylated (O-linked (Xyl...) (chondroitin sulfate) serine). 3 N-linked (GlcNAc...) asparagine glycosylation sites follow: N2263, N2290, and N2356. Disordered regions lie at residues 2338-2388 (EGPF…AETK), 2490-2512 (EQREGSPEATGTPASTASYEKAT), and 2594-2615 (TDLDPEVPSGPPDSSEESTQVQ). Composition is skewed to polar residues over residues 2345 to 2357 (LTFSTGPGQPQNQ) and 2367 to 2383 (TSRPQPLTDQVSSENSV). 2 positions are modified to phosphoserine: S2607 and S2608. T2612 carries the phosphothreonine modification. N2623 and N2641 each carry an N-linked (GlcNAc...) asparagine glycan. O-linked (Xyl...) (chondroitin sulfate) serine glycans are attached at residues S2714, S2715, and S2759. A disordered region spans residues 2819 to 2893 (PPLSIHLGSG…EPSEDESKPK (75 aa)). Positions 2840–2851 (ALPSTDASTPPV) are enriched in polar residues. 2 N-linked (GlcNAc...) asparagine glycosylation sites follow: N2919 and N3052. The region spanning 3074 to 3110 (GPDRCKMNPCLNGGTCYPTETSYVCTCVPGYSGDRCE) is the EGF-like 1 domain. 11 disulfides stabilise this stretch: C3078/C3089, C3083/C3098, C3100/C3109, C3116/C3127, C3121/C3136, C3138/C3147, C3154/C3165, C3182/C3274, C3250/C3266, C3281/C3324, and C3310/C3337. An EGF-like 2; calcium-binding domain is found at 3112–3148 (DFDECHSNPCRNGATCIDGFNTFRCLCLPSYVGALCE). The C-type lectin domain maps to 3161 to 3275 (FQGQCYKYFA…CNYHLTYTCK (115 aa)). Residues 3279–3339 (VACGQPPVVE…WAMPKITCLN (61 aa)) enclose the Sushi domain. 2 N-linked (GlcNAc...) asparagine glycosylation sites follow: N3354 and N3364. Polar residues predominate over residues 3355-3365 (SSSAKDNSINT). A disordered region spans residues 3355-3381 (SSSAKDNSINTSKHDHRWSRRWQESRR).

This sequence belongs to the aggrecan/versican proteoglycan family. As to quaternary structure, interacts with FBLN1. In terms of processing, phosphorylated by FAM20C in the extracellular medium. Post-translationally, proteolytically cleaved by ADAMTS5 and ADAMTS15 in the pericellular matrix surrounding myoblasts, facilitating myoblast contact and fusion which is required for skeletal muscle development and regeneration. Cerebral white matter. Isoform V0 and isoform V1 are expressed in the central nervous system, and in a number of mesenchymal and epithelial tissues; the major isoform V2 is restricted to the central nervous system.

It is found in the secreted. The protein localises to the extracellular space. It localises to the extracellular matrix. Its subcellular location is the cell projection. The protein resides in the cilium. It is found in the photoreceptor outer segment. The protein localises to the interphotoreceptor matrix. May play a role in intercellular signaling and in connecting cells with the extracellular matrix. May take part in the regulation of cell motility, growth and differentiation. Binds hyaluronic acid. The chain is Versican core protein (VCAN) from Bos taurus (Bovine).